Reading from the N-terminus, the 271-residue chain is 3-methyl-2-oxobutanoate hydroxymethyltransferase (271 aa).

Mg(2+)-binding residues include aspartate 53 and aspartate 92. 3-methyl-2-oxobutanoate contacts are provided by residues 53-54 (DS), aspartate 92, and lysine 120. Glutamate 122 serves as a coordination point for Mg(2+). Glutamate 189 acts as the Proton acceptor in catalysis.

The protein belongs to the PanB family. Homodecamer; pentamer of dimers. The cofactor is Mg(2+).

Its subcellular location is the cytoplasm. The catalysed reaction is 3-methyl-2-oxobutanoate + (6R)-5,10-methylene-5,6,7,8-tetrahydrofolate + H2O = 2-dehydropantoate + (6S)-5,6,7,8-tetrahydrofolate. It participates in cofactor biosynthesis; (R)-pantothenate biosynthesis; (R)-pantoate from 3-methyl-2-oxobutanoate: step 1/2. Functionally, catalyzes the reversible reaction in which hydroxymethyl group from 5,10-methylenetetrahydrofolate is transferred onto alpha-ketoisovalerate to form ketopantoate. The chain is 3-methyl-2-oxobutanoate hydroxymethyltransferase from Burkholderia mallei (strain NCTC 10247).